Consider the following 294-residue polypeptide: MNNIFKGLITAIITPFRDNKLDLNALEKILEYQINAEVNAVVIAGSTGEGSSLSFEEYKLLLQTAKDIVNKRIPVISGCSSNNTACAIELAAESTKIGVDGFMISPPSYLKPTQGGIYKHFEAIHEASNLPIMLYSVPSRTGVDFTDETILKLSKLSRILALKDAGIDLERPLRIKSVINKEFNLLCGNDDLSLAFNAQGGVGCVSVASNITPKLCKELQEKWHNNDVKGALGIHQRLLPLYKALFVESNPIPVKYAMYYLGFCTNEIRLPLTEATDTTKKQIEEIITSLSIKV.

T47 contacts pyruvate. The Proton donor/acceptor role is filled by Y135. Residue K163 is the Schiff-base intermediate with substrate of the active site. V205 provides a ligand contact to pyruvate.

This sequence belongs to the DapA family. As to quaternary structure, homotetramer; dimer of dimers.

It is found in the cytoplasm. It catalyses the reaction L-aspartate 4-semialdehyde + pyruvate = (2S,4S)-4-hydroxy-2,3,4,5-tetrahydrodipicolinate + H2O + H(+). It functions in the pathway amino-acid biosynthesis; L-lysine biosynthesis via DAP pathway; (S)-tetrahydrodipicolinate from L-aspartate: step 3/4. Catalyzes the condensation of (S)-aspartate-beta-semialdehyde [(S)-ASA] and pyruvate to 4-hydroxy-tetrahydrodipicolinate (HTPA). This is 4-hydroxy-tetrahydrodipicolinate synthase from Rickettsia bellii (strain RML369-C).